Here is a 335-residue protein sequence, read N- to C-terminus: Autophagy-related protein 21 (335 aa).

2 WD repeats span residues 165-205 (CHSS…LVTE) and 210-249 (YIPA…SDPN).

It belongs to the WD repeat PROPPIN family.

It localises to the cytoplasm. The protein localises to the golgi apparatus. The protein resides in the golgi stack membrane. Its subcellular location is the vacuole membrane. It is found in the preautophagosomal structure membrane. Its function is as follows. Required for cytoplasm to vacuole transport (Cvt) vesicles formation and autophagy. Has a role in sporulation. The sequence is that of Autophagy-related protein 21 (mug179) from Schizosaccharomyces pombe (strain 972 / ATCC 24843) (Fission yeast).